Reading from the N-terminus, the 78-residue chain is Acyl carrier protein (78 aa).

The Carrier domain occupies 1 to 75 (MIKEKILSIV…DLISVVKNST (75 aa)). Residue Ser-35 is modified to O-(pantetheine 4'-phosphoryl)serine.

The protein belongs to the acyl carrier protein (ACP) family. Post-translationally, 4'-phosphopantetheine is transferred from CoA to a specific serine of apo-ACP by AcpS. This modification is essential for activity because fatty acids are bound in thioester linkage to the sulfhydryl of the prosthetic group.

It is found in the cytoplasm. Its pathway is lipid metabolism; fatty acid biosynthesis. Its function is as follows. Carrier of the growing fatty acid chain in fatty acid biosynthesis. This Shigella flexneri protein is Acyl carrier protein (acpP).